A 176-amino-acid chain; its full sequence is HTH-type transcriptional regulator DctR (176 aa).

Positions 109–174 constitute an HTH luxR-type domain; the sequence is VPEANVSLSR…ELVRHQHIDY (66 aa). The segment at residues 133-152 is a DNA-binding region (H-T-H motif); the sequence is TEDILEKLKISLKTFYCHKH.

Its function is as follows. May act as a transcriptional regulator of dctA. The protein is HTH-type transcriptional regulator DctR (dctR) of Shigella flexneri.